The following is a 1299-amino-acid chain: DNA-directed RNA polymerase subunit beta' (1299 aa).

Zn(2+) is bound by residues cysteine 60, cysteine 62, cysteine 75, and cysteine 78. Mg(2+)-binding residues include aspartate 535, aspartate 537, and aspartate 539. The Zn(2+) site is built by cysteine 877, cysteine 954, cysteine 961, and cysteine 964.

This sequence belongs to the RNA polymerase beta' chain family. The RNAP catalytic core consists of 2 alpha, 1 beta, 1 beta' and 1 omega subunit. When a sigma factor is associated with the core the holoenzyme is formed, which can initiate transcription. Mg(2+) serves as cofactor. Requires Zn(2+) as cofactor.

The enzyme catalyses RNA(n) + a ribonucleoside 5'-triphosphate = RNA(n+1) + diphosphate. In terms of biological role, DNA-dependent RNA polymerase catalyzes the transcription of DNA into RNA using the four ribonucleoside triphosphates as substrates. The protein is DNA-directed RNA polymerase subunit beta' of Renibacterium salmoninarum (strain ATCC 33209 / DSM 20767 / JCM 11484 / NBRC 15589 / NCIMB 2235).